A 284-amino-acid chain; its full sequence is 2-dehydro-3-deoxyphosphooctonate aldolase (284 aa).

Belongs to the KdsA family.

It is found in the cytoplasm. The enzyme catalyses D-arabinose 5-phosphate + phosphoenolpyruvate + H2O = 3-deoxy-alpha-D-manno-2-octulosonate-8-phosphate + phosphate. Its pathway is carbohydrate biosynthesis; 3-deoxy-D-manno-octulosonate biosynthesis; 3-deoxy-D-manno-octulosonate from D-ribulose 5-phosphate: step 2/3. It functions in the pathway bacterial outer membrane biogenesis; lipopolysaccharide biosynthesis. The polypeptide is 2-dehydro-3-deoxyphosphooctonate aldolase (Actinobacillus pleuropneumoniae serotype 7 (strain AP76)).